Consider the following 433-residue polypeptide: MQALNITAEQFSRLLSAHNLTREQFIHRYGLRPLVYTPELPARAKVAFALAGALIFALALFGNSLVIYVVTRSKAMRTVTNIFICSLALSDLLIAFFCIPVTMLQNISDKWLGGAFICKMVPFVQSTAVVTEILTMTCIAVERHQGLVHPFKMKWQYTTRRAFTILGVVWLAAIIVGSPMWHVQRLEIKYDFLYEKEHICCLEEWASPVHQRIYSTFILVILFLLPLVVMLVLYSKIGYELWIKKRVGDSSALQTIHGKEMSKIARKKKRAVIMMVTVVALFAACWAPFHVVHMMVEYSNFEKEYDDVTIKMVFAVAQTIGFFNSICNPFVYAFMNENFKKNFLSAVCYCIVKESSSPARKPGNSGISMMQKRAKLSRPQRPVEETKGDTFSDASIDVKLCEQPREKRQLKRQLAFFSSELSENSTFGSGHEL.

The Extracellular segment spans residues 1–46 (MQALNITAEQFSRLLSAHNLTREQFIHRYGLRPLVYTPELPARAKV). Residues asparagine 5 and asparagine 19 are each glycosylated (N-linked (GlcNAc...) asparagine). A helical transmembrane segment spans residues 47–67 (AFALAGALIFALALFGNSLVI). Residues 68–81 (YVVTRSKAMRTVTN) are Cytoplasmic-facing. A helical membrane pass occupies residues 82–102 (IFICSLALSDLLIAFFCIPVT). At 103 to 120 (MLQNISDKWLGGAFICKM) the chain is on the extracellular side. The helical transmembrane segment at 121–141 (VPFVQSTAVVTEILTMTCIAV) threads the bilayer. At 142 to 162 (ERHQGLVHPFKMKWQYTTRRA) the chain is on the cytoplasmic side. Residues 163-183 (FTILGVVWLAAIIVGSPMWHV) traverse the membrane as a helical segment. Topologically, residues 184–212 (QRLEIKYDFLYEKEHICCLEEWASPVHQR) are extracellular. The helical transmembrane segment at 213–233 (IYSTFILVILFLLPLVVMLVL) threads the bilayer. Residues 234–271 (YSKIGYELWIKKRVGDSSALQTIHGKEMSKIARKKKRA) lie on the Cytoplasmic side of the membrane. Residues 272–292 (VIMMVTVVALFAACWAPFHVV) traverse the membrane as a helical segment. Residues 293–313 (HMMVEYSNFEKEYDDVTIKMV) lie on the Extracellular side of the membrane. Residues 314–334 (FAVAQTIGFFNSICNPFVYAF) traverse the membrane as a helical segment. Over 335 to 433 (MNENFKKNFL…NSTFGSGHEL (99 aa)) the chain is Cytoplasmic. The tract at residues 356-389 (SSPARKPGNSGISMMQKRAKLSRPQRPVEETKGD) is disordered.

This sequence belongs to the G-protein coupled receptor 1 family. In terms of tissue distribution, highly expressed in the adrenal gland and at moderate levels in the eye and testis. Expressed widely in the brain with high levels in the hypothalamus and moderate levels in the amygdala, basal forebrain, cortex, medulla oblongata, midbrain and thalamus.

It localises to the cell membrane. Functionally, receptor for the orexigenic neuropeptide QRFP. The activity of this receptor is mediated by G proteins that modulate adenylate cyclase activity and intracellular calcium levels. This Rattus norvegicus (Rat) protein is Pyroglutamylated RF-amide peptide receptor (Qrfpr).